A 74-amino-acid chain; its full sequence is Antimicrobial peptide AcrAP2 (74 aa).

The signal sequence occupies residues Met-1–Ala-22. Lys-40 is subject to Lysine amide. Residues Asn-46 to Tyr-74 constitute a propeptide that is removed on maturation.

This sequence belongs to the non-disulfide-bridged peptide (NDBP) superfamily. Short antimicrobial peptide (group 4) family. In terms of tissue distribution, expressed by the venom gland.

It is found in the secreted. It localises to the target cell membrane. Functionally, has antimicrobial activity against the Gram-positive bacteria S.aureus (MIC=8 uM) and the yeast C.albicans (MIC=16 uM). Causes hemolysis on horse erythrocytes (64 uM for 100% hemolysis). Minimum bactericidal concentrations have also been tested against S.aureus and is four-fold higher (MBC=32 uM). This is Antimicrobial peptide AcrAP2 from Androctonus crassicauda (Arabian fat-tailed scorpion).